The primary structure comprises 681 residues: Pentatricopeptide repeat-containing protein At2g22410, mitochondrial (681 aa).

A mitochondrion-targeting transit peptide spans 1-32 (MNISKAKLLLLPPPLTPKLNRSLYSHSQRRTR). PPR repeat units lie at residues 117 to 151 (NIFS…GCCE), 155 to 189 (DHFT…RLEL), 190 to 220 (VSHV…SPVR), 221 to 255 (DLVS…GVKP), 256 to 290 (DDVT…GLRM), 291 to 321 (TIPL…LEKR), 322 to 356 (TIVS…DVVL), 357 to 387 (WNAM…NTKP), 388 to 422 (DEIT…SLSL), 423 to 453 (NVAL…IQTR), 454 to 488 (NSLT…GIAP), 489 to 519 (DEIT…MKSR), and 525 to 555 (QLKH…MPME). The interval 560–635 (VWGALLFGCR…IPGCSSIEVN (76 aa)) is type E motif. Residues 636 to 666 (GIVCEFIVRDKSRPESEKIYDRLHCLGRHMR) are type E(+) motif.

It belongs to the PPR family. PCMP-E subfamily.

The protein localises to the mitochondrion. This Arabidopsis thaliana (Mouse-ear cress) protein is Pentatricopeptide repeat-containing protein At2g22410, mitochondrial (PCMP-E28).